We begin with the raw amino-acid sequence, 162 residues long: Small ribosomal subunit protein uS13 (162 aa).

Residues 142–162 are disordered; it reads RGQRTKSTGRRGSTVGVSRKK.

This sequence belongs to the universal ribosomal protein uS13 family. In terms of assembly, part of the 30S ribosomal subunit. Forms a loose heterodimer with protein S19. Forms two bridges to the 50S subunit in the 70S ribosome.

Its function is as follows. Located at the top of the head of the 30S subunit, it contacts several helices of the 16S rRNA. In the 70S ribosome it contacts the 23S rRNA (bridge B1a) and protein L5 of the 50S subunit (bridge B1b), connecting the 2 subunits; these bridges are implicated in subunit movement. The chain is Small ribosomal subunit protein uS13 from Methanosarcina mazei (strain ATCC BAA-159 / DSM 3647 / Goe1 / Go1 / JCM 11833 / OCM 88) (Methanosarcina frisia).